A 199-amino-acid polypeptide reads, in one-letter code: NAD(P)H dehydrogenase (quinone) (199 aa).

Positions 4–190 (VLVLYYSAYG…GGARYQGKVI (187 aa)) constitute a Flavodoxin-like domain. Residues 10-15 (SAYGHI) and 78-80 (TRF) each bind FMN. Tyrosine 12 contributes to the NAD(+) binding site. Tryptophan 98 is a binding site for substrate. FMN is bound by residues 113–119 (STASQHG) and histidine 134.

The protein belongs to the WrbA family. The cofactor is FMN.

It catalyses the reaction a quinone + NADH + H(+) = a quinol + NAD(+). It carries out the reaction a quinone + NADPH + H(+) = a quinol + NADP(+). The polypeptide is NAD(P)H dehydrogenase (quinone) (Rhodopseudomonas palustris (strain BisB18)).